Reading from the N-terminus, the 92-residue chain is Probable acyl carrier protein (92 aa).

Residues 11-92 (QVTFEELSAL…QVNATLRTAV (82 aa)) form the Carrier domain. O-(pantetheine 4'-phosphoryl)serine is present on Ser49.

Post-translationally, 4'-phosphopantetheine is transferred from CoA to a specific serine of the apo-ACP-like protein.

Functionally, involved in developmentally regulated synthesis of a compound biosynthetically related to polyketide antibiotics which is essential for spore color in Streptomyces halstedii. The polypeptide is Probable acyl carrier protein (sch3) (Streptomyces halstedii).